A 67-amino-acid chain; its full sequence is Alpha-actitoxin-Ms11a-3 (67 aa).

A signal peptide spans 1–24 (MASKIFFVLAVFLVMSAVLPESFA). 3 disulfides stabilise this stretch: Cys-26-Cys-41, Cys-33-Cys-46, and Cys-40-Cys-61. Residue Lys-66 is modified to Lysine amide.

The protein localises to the secreted. It is found in the nematocyst. In terms of biological role, alpha-toxins act on postsynaptic membranes, they bind to the nicotinic acetylcholine receptors (nAChR) and thus inhibit them. This toxin shows inhibition against mouse alpha-1-beta-1-delta-epsilon (CHRNA1-CHRNB1-CHRND-CHRNE) (IC(50)=1215 nM), rat alpha-3-beta-4/CHRNA3-CHRNB4 (IC(50)=5.173 uM), rat alpha-7/CHRNA7 (IC(50)=4.786 uM), human alpha-7/CHRNA7 (IC(50)=8.869 uM), and rat alpha-9-alpha-10/CHRNA9-CHRNA10 (IC(50)=202 nM). Also competes with alpha-bungarotoxin for binding to orthosteric sites on muscle-type T.carlifornicus (IC(50)=256 nM) and human alpha-7/CHRNA7 nAChRs (IC(50)=19.81 uM). In Metridium senile (Brown sea anemone), this protein is Alpha-actitoxin-Ms11a-3.